We begin with the raw amino-acid sequence, 51 residues long: Mitochondrial import receptor subunit TOM5 homolog (51 aa).

Met1 is modified (N-acetylmethionine). Lys10 is covalently cross-linked (Glycyl lysine isopeptide (Lys-Gly) (interchain with G-Cter in SUMO2)). The chain crosses the membrane as a helical span at residues 27–45 (SIRNFLIYVALLRVTPFIL).

It belongs to the Tom5 family. Forms part of the preprotein translocase complex of the outer mitochondrial membrane (TOM complex) which consists of at least 7 different proteins (TOMM5, TOMM6, TOMM7, TOMM20, TOMM22, TOMM40 and TOMM70).

It is found in the mitochondrion outer membrane. This chain is Mitochondrial import receptor subunit TOM5 homolog, found in Bos taurus (Bovine).